A 140-amino-acid polypeptide reads, in one-letter code: uncharacterized protein (140 aa).

2 helical membrane-spanning segments follow: residues 63-83 and 119-139; these read LGFV…TLAT and ILLY…IFIN.

It localises to the membrane. This is an uncharacterized protein from Schizosaccharomyces pombe (strain 972 / ATCC 24843) (Fission yeast).